A 261-amino-acid polypeptide reads, in one-letter code: Chanoclavine-I dehydrogenase easD (261 aa).

A signal peptide spans 1–20 (MPSMTSKVFAITGGASGIGA). Residue Ile-18 coordinates NADP(+). The N-linked (GlcNAc...) asparagine glycan is linked to Asn-43. The NADP(+) site is built by Asp-66, Arg-132, Tyr-166, Lys-170, and Thr-201. Tyr-166 functions as the Proton donor in the catalytic mechanism. Catalysis depends on Lys-170, which acts as the Lowers pKa of active site Tyr.

This sequence belongs to the short-chain dehydrogenases/reductases (SDR) family. Homotetramer.

It catalyses the reaction chanoclavine-I + NAD(+) = chanoclavine-I aldehyde + NADH + H(+). It participates in alkaloid biosynthesis; ergot alkaloid biosynthesis. In terms of biological role, chanoclavine-I dehydrogenase; part of the gene cluster that mediates the biosynthesis of fungal ergot alkaloid. DmaW catalyzes the first step of ergot alkaloid biosynthesis by condensing dimethylallyl diphosphate (DMAP) and tryptophan to form 4-dimethylallyl-L-tryptophan. The second step is catalyzed by the methyltransferase easF that methylates 4-dimethylallyl-L-tryptophan in the presence of S-adenosyl-L-methionine, resulting in the formation of 4-dimethylallyl-L-abrine. The catalase easC and the FAD-dependent oxidoreductase easE then transform 4-dimethylallyl-L-abrine to chanoclavine-I which is further oxidized by easD in the presence of NAD(+), resulting in the formation of chanoclavine-I aldehyde. Agroclavine dehydrogenase easG then mediates the conversion of chanoclavine-I aldehyde to agroclavine via a non-enzymatic adduct reaction: the substrate is an iminium intermediate that is formed spontaneously from chanoclavine-I aldehyde in the presence of glutathione. The presence of easA is not required to complete this reaction. Further conversion of agroclavine to paspalic acid is a two-step process involving oxidation of agroclavine to elymoclavine and of elymoclavine to paspalic acid, the second step being performed by the elymoclavine oxidase cloA. Paspalic acid is then further converted to D-lysergic acid. Ergopeptines are assembled from D-lysergic acid and three different amino acids by the D-lysergyl-peptide-synthetases composed each of a monomudular and a trimodular nonribosomal peptide synthetase subunit. LpsB and lpsC encode the monomodular subunits responsible for D-lysergic acid activation and incorporation into the ergopeptine backbone. LpsA1 and A2 subunits encode the trimodular nonribosomal peptide synthetase assembling the tripeptide portion of ergopeptines. LpsA1 is responsible for formation of the major ergopeptine, ergotamine, and lpsA2 for alpha-ergocryptine, the minor ergopeptine of the total alkaloid mixture elaborated by C.purpurea. D-lysergyl-tripeptides are assembled by the nonribosomal peptide synthetases and released as N-(D-lysergyl-aminoacyl)-lactams. Cyclolization of the D-lysergyl-tripeptides is performed by the Fe(2+)/2-ketoglutarate-dependent dioxygenase easH which introduces a hydroxyl group into N-(D-lysergyl-aminoacyl)-lactam at alpha-C of the aminoacyl residue followed by spontaneous condensation with the terminal lactam carbonyl group. The protein is Chanoclavine-I dehydrogenase easD of Claviceps purpurea (Ergot fungus).